We begin with the raw amino-acid sequence, 421 residues long: Putative aspartate aminotransferase, cytoplasmic 2 (421 aa).

N6-(pyridoxal phosphate)lysine is present on K249.

This sequence belongs to the class-I pyridoxal-phosphate-dependent aminotransferase family. In terms of assembly, homodimer. Pyridoxal 5'-phosphate is required as a cofactor.

Its subcellular location is the cytoplasm. The enzyme catalyses L-aspartate + 2-oxoglutarate = oxaloacetate + L-glutamate. The protein is Putative aspartate aminotransferase, cytoplasmic 2 (GOT1L1) of Homo sapiens (Human).